The chain runs to 103 residues: Large ribosomal subunit protein bL21 (103 aa).

Belongs to the bacterial ribosomal protein bL21 family. As to quaternary structure, part of the 50S ribosomal subunit. Contacts protein L20.

Its function is as follows. This protein binds to 23S rRNA in the presence of protein L20. The chain is Large ribosomal subunit protein bL21 from Wigglesworthia glossinidia brevipalpis.